We begin with the raw amino-acid sequence, 418 residues long: Hydroxysqualene dehydroxylase (418 aa).

This sequence belongs to the HpnE family.

The catalysed reaction is squalene + FAD + H2O + H(+) = hydroxysqualene + FADH2. It participates in secondary metabolite biosynthesis; hopanoid biosynthesis. Involved in the biosynthesis of the hopanoid precursor squalene (SQ) from farnesyl diphosphate (FPP). Catalyzes the third (last) step, the reduction of hydroxysqualene (HSQ) to SQ. The chain is Hydroxysqualene dehydroxylase from Rhodopseudomonas palustris (strain ATCC BAA-98 / CGA009).